Here is a 256-residue protein sequence, read N- to C-terminus: Type III pantothenate kinase (256 aa).

6 to 13 serves as a coordination point for ATP; it reads DAGNSRIK. Substrate is bound by residues tyrosine 90 and 97 to 100; that span reads GSDR. Catalysis depends on aspartate 99, which acts as the Proton acceptor. Threonine 123 serves as a coordination point for ATP. Position 187 (threonine 187) interacts with substrate.

The protein belongs to the type III pantothenate kinase family. As to quaternary structure, homodimer. The cofactor is NH4(+). K(+) serves as cofactor.

Its subcellular location is the cytoplasm. The catalysed reaction is (R)-pantothenate + ATP = (R)-4'-phosphopantothenate + ADP + H(+). Its pathway is cofactor biosynthesis; coenzyme A biosynthesis; CoA from (R)-pantothenate: step 1/5. Functionally, catalyzes the phosphorylation of pantothenate (Pan), the first step in CoA biosynthesis. This chain is Type III pantothenate kinase, found in Burkholderia mallei (strain NCTC 10247).